A 443-amino-acid polypeptide reads, in one-letter code: tRNA modification GTPase MnmE (443 aa).

Residues Arg23, Glu81, and Lys119 each contribute to the (6S)-5-formyl-5,6,7,8-tetrahydrofolate site. The TrmE-type G domain maps to 214 to 369 (GMRVAILGKP…LLSALKERAI (156 aa)). GTP contacts are provided by residues 224-229 (NVGKST), 243-249 (SEYPGTT), and 268-271 (DTAG). The Mg(2+) site is built by Ser228 and Thr249. Lys443 provides a ligand contact to (6S)-5-formyl-5,6,7,8-tetrahydrofolate.

Belongs to the TRAFAC class TrmE-Era-EngA-EngB-Septin-like GTPase superfamily. TrmE GTPase family. Homodimer. Heterotetramer of two MnmE and two MnmG subunits. K(+) is required as a cofactor.

The protein resides in the cytoplasm. In terms of biological role, exhibits a very high intrinsic GTPase hydrolysis rate. Involved in the addition of a carboxymethylaminomethyl (cmnm) group at the wobble position (U34) of certain tRNAs, forming tRNA-cmnm(5)s(2)U34. The protein is tRNA modification GTPase MnmE of Anaplasma marginale (strain St. Maries).